A 180-amino-acid chain; its full sequence is Oligoribonuclease (180 aa).

An Exonuclease domain is found at 7–170 (LIWIDLEMTG…DDIRESIAEL (164 aa)). Tyr-128 is a catalytic residue.

This sequence belongs to the oligoribonuclease family.

The protein resides in the cytoplasm. Its function is as follows. 3'-to-5' exoribonuclease specific for small oligoribonucleotides. This Pseudomonas entomophila (strain L48) protein is Oligoribonuclease.